The chain runs to 643 residues: Probable extracellular metalloproteinase 4 (643 aa).

Positions 1–18 are cleaved as a signal peptide; sequence MHGLLLAGLLALPLNVFA. Positions 19-254 are excised as a propeptide; that stretch reads HPTESHSSGV…VHSVVDYVSA (236 aa). Positions 49–69 are disordered; sequence SDAVPKQDGESFTTSSTGDDN. Residues 58 to 69 show a composition bias toward polar residues; that stretch reads ESFTTSSTGDDN. 2 N-linked (GlcNAc...) asparagine glycosylation sites follow: asparagine 271 and asparagine 420. Residue histidine 437 coordinates Zn(2+). Glutamate 438 is an active-site residue. Residue histidine 441 coordinates Zn(2+). Residues asparagine 603 and asparagine 629 are each glycosylated (N-linked (GlcNAc...) asparagine).

It belongs to the peptidase M36 family. Requires Zn(2+) as cofactor.

It localises to the secreted. Secreted metalloproteinase probably acting as a virulence factor. The polypeptide is Probable extracellular metalloproteinase 4 (MEP4) (Trichophyton verrucosum (strain HKI 0517)).